Here is a 361-residue protein sequence, read N- to C-terminus: Phospho-N-acetylmuramoyl-pentapeptide-transferase (361 aa).

10 helical membrane passes run 28–48 (LAII…IEFL), 74–94 (TMGG…LADL), 99–119 (IWIT…DDYA), 133–153 (SKLL…EYLD), 168–188 (LSLD…VGSS), 203–223 (VPIA…GNLI), 236–256 (TGEL…FLWF), 263–283 (VFMG…ISVI), 288–308 (IVLA…ILQV), and 338–358 (KVVI…LSSL).

The protein belongs to the glycosyltransferase 4 family. MraY subfamily. Requires Mg(2+) as cofactor.

The protein resides in the cell inner membrane. It carries out the reaction UDP-N-acetyl-alpha-D-muramoyl-L-alanyl-gamma-D-glutamyl-meso-2,6-diaminopimeloyl-D-alanyl-D-alanine + di-trans,octa-cis-undecaprenyl phosphate = di-trans,octa-cis-undecaprenyl diphospho-N-acetyl-alpha-D-muramoyl-L-alanyl-D-glutamyl-meso-2,6-diaminopimeloyl-D-alanyl-D-alanine + UMP. The protein operates within cell wall biogenesis; peptidoglycan biosynthesis. In terms of biological role, catalyzes the initial step of the lipid cycle reactions in the biosynthesis of the cell wall peptidoglycan: transfers peptidoglycan precursor phospho-MurNAc-pentapeptide from UDP-MurNAc-pentapeptide onto the lipid carrier undecaprenyl phosphate, yielding undecaprenyl-pyrophosphoryl-MurNAc-pentapeptide, known as lipid I. This is Phospho-N-acetylmuramoyl-pentapeptide-transferase from Rickettsia africae (strain ESF-5).